The chain runs to 445 residues: Fatty acid desaturase 3 (445 aa).

The interval 1-21 (MGGVGEPGPREGPAQPGAPLP) is disordered. At 1–133 (MGGVGEPGPR…DMKLFDASPT (133 aa)) the chain is on the cytoplasmic side. The region spanning 20 to 97 (LPTFCWEQIR…LQPLLIGELA (78 aa)) is the Cytochrome b5 heme-binding domain. Residues 134–154 (FFAFLLGHILAMEVLAWLLIY) form a helical membrane-spanning segment. The Lumenal portion of the chain corresponds to 155 to 159 (LLGPG). The helical transmembrane segment at 160–180 (WVPSALAAFILAISQAQSWCL) threads the bilayer. Topologically, residues 181–263 (QHDLGHASIF…KRRYLPYNQQ (83 aa)) are cytoplasmic. Residues 182–186 (HDLGH) carry the Histidine box-1 motif. The Histidine box-2 signature appears at 219-223 (HFQHH). The helical transmembrane segment at 264 to 284 (HLYFFLIGPPLLTLVNFEVEN) threads the bilayer. The Lumenal portion of the chain corresponds to 285–306 (LAYMLVCMQWADLLWAASFYAR). A helical membrane pass occupies residues 307–327 (FFLSYLPFYGVPGVLLFFVAV). The Cytoplasmic segment spans residues 328–445 (RVLESHWFVW…DIWLDAYLHQ (118 aa)). The short motif at 383 to 387 (QIEHH) is the Histidine box-3 element.

The protein belongs to the fatty acid desaturase type 1 family. In terms of tissue distribution, highly expressed in various organs and tissues including liver, kidney, brain, lung, pancreas, testis, ovary and skeletal muscle (at protein level).

It localises to the endoplasmic reticulum membrane. It catalyses the reaction an N-acylsphing-4-enine + 2 Fe(II)-[cytochrome b5] + O2 + 2 H(+) = an N-acyl-sphinga-4E,14Z-dienine + 2 Fe(III)-[cytochrome b5] + 2 H2O. It carries out the reaction N-(hexanoyl)sphing-4-enine + 2 Fe(II)-[cytochrome b5] + O2 + 2 H(+) = N-hexanoyl-sphinga-4E,14Z-dienine + 2 Fe(III)-[cytochrome b5] + 2 H2O. The enzyme catalyses sphing-4-enine + 2 Fe(II)-[cytochrome b5] + O2 + 2 H(+) = sphinga-4E,14Z-dienine + 2 Fe(III)-[cytochrome b5] + 2 H2O. The catalysed reaction is (11E)-octadecenoyl-CoA + 2 Fe(II)-[cytochrome b5] + O2 + 2 H(+) = (11E,13Z)-octadecadienoyl-CoA + 2 Fe(III)-[cytochrome b5] + 2 H2O. It catalyses the reaction N-acyl-1-deoxysphinganine + 2 Fe(II)-[cytochrome b5] + O2 + 2 H(+) = N-acyl-1-deoxysphing-14Z-enine + 2 Fe(III)-[cytochrome b5] + 2 H2O. It carries out the reaction an N-acylsphinganine + 2 Fe(II)-[cytochrome b5] + O2 + 2 H(+) = an N-acylsphing-14Z-enine + 2 Fe(III)-[cytochrome b5] + 2 H2O. The protein operates within lipid metabolism; sphingolipid metabolism. It participates in lipid metabolism; polyunsaturated fatty acid biosynthesis. In terms of biological role, mammals have different sphingoid bases that differ in their length and/or pattern of desaturation and hydroxyl groups. The predominant sphingoid base that comprises mammalian ceramides is sphing-4-enine (sphingosine or SPH) which has a trans (E) desaturation at carbon 4. FADS3 is a desaturase that introduces a cis (Z) double bond between carbon 14 and carbon 15 of the sphingoid base (also known as long chain base, LCB), producing LCBs such as sphinga-4,14-dienine (SPD, d18:2(4E,14Z)) from SPH. Prefers SPH-containing ceramides (N-acylsphing-4-enines) as substrates. Capable of metabolizing also the SPH in its free form. SPD ceramides occur widely in mammalian tissues and cells. Due to their unusual structure containing a cis double bond, SPD ceramides may have an opposite, negative role in lipid microdomain formation relative to conventional ceramides. Could be involved in the detoxification of 1-deoxy sphingolipids, by desaturating the cytotoxic 1-deoxysphinganine (1-deoxySA, m18:0), produced under pathological conditions, to 1-deoxysphingenine (1-deoxysphingosine, 1-deoxySO, m18:1). Although prefers SPH-containing ceramides (N-acylsphing-4-enines) as substrates, it also exhibits activity toward dihydrosphingosine-containing CERs (N-acylsphinganines) and produces 14Z-SPH-containing sphingolipids,which can be found in patients with DEGS1 mutations. Its desaturase mechanism involves an electron transfer facilitated by cytochrome b5. FADS3 also acts as a methyl-end fatty acyl coenzyme A (CoA) desaturase that introduces a cis double bond between the preexisting double bond and the terminal methyl group of the fatty acyl chain. Desaturates (11E)-octadecenoate (trans-vaccenoate, the predominant trans fatty acid in human milk) at carbon 13 to generate (11E,13Z)-octadecadienoate (also known as conjugated linoleic acid 11E,13Z-CLA). The chain is Fatty acid desaturase 3 from Homo sapiens (Human).